The sequence spans 89 residues: Small ribosomal subunit protein uS15 (89 aa).

The protein belongs to the universal ribosomal protein uS15 family. As to quaternary structure, part of the 30S ribosomal subunit. Forms a bridge to the 50S subunit in the 70S ribosome, contacting the 23S rRNA.

Functionally, one of the primary rRNA binding proteins, it binds directly to 16S rRNA where it helps nucleate assembly of the platform of the 30S subunit by binding and bridging several RNA helices of the 16S rRNA. Forms an intersubunit bridge (bridge B4) with the 23S rRNA of the 50S subunit in the ribosome. This chain is Small ribosomal subunit protein uS15, found in Methylobacterium sp. (strain 4-46).